Reading from the N-terminus, the 557-residue chain is UvrABC system protein C (557 aa).

One can recognise a GIY-YIG domain in the interval E14–V89. One can recognise a UVR domain in the interval E194 to V229.

Belongs to the UvrC family. In terms of assembly, interacts with UvrB in an incision complex.

It is found in the cytoplasm. In terms of biological role, the UvrABC repair system catalyzes the recognition and processing of DNA lesions. UvrC both incises the 5' and 3' sides of the lesion. The N-terminal half is responsible for the 3' incision and the C-terminal half is responsible for the 5' incision. The chain is UvrABC system protein C from Thermotoga maritima (strain ATCC 43589 / DSM 3109 / JCM 10099 / NBRC 100826 / MSB8).